The following is an 866-amino-acid chain: Retinoblastoma-related protein 2 (866 aa).

The tract at residues 274-475 (TPITSAMTTA…EKGSSLYNSL (202 aa)) is domain A. The interval 274-721 (TPITSAMTTA…NEVFVPAAKP (448 aa)) is pocket. The segment at 476 to 593 (IVARPSVASE…PVGGNEKCAD (118 aa)) is spacer. Positions 513-551 (LPATPSKKRAAGRDDNADPRSPKRPCNESRSPVVEHNLQ) are disordered. Basic and acidic residues predominate over residues 523–539 (AGRDDNADPRSPKRPCN). The interval 594–721 (VTIQIFFSKI…NEVFVPAAKP (128 aa)) is domain B. 2 disordered regions span residues 731–754 (TRPE…PFPN) and 839–866 (SLGQ…KPDT). A compositionally biased stretch (polar residues) spans 841 to 850 (GQPNGGSTSL).

Belongs to the retinoblastoma protein (RB) family. In terms of tissue distribution, ubiquitous.

The protein localises to the nucleus. Regulator of biological processes that recruits a histone deacetylase to control gene transcription. May play a role in the entry into mitosis, negatively regulating the cell proliferation. Formation of stable complexes with geminiviridae replication-associated proteins may create a cellular environment which favors viral DNA replication. The protein is Retinoblastoma-related protein 2 (RBR2) of Zea mays (Maize).